We begin with the raw amino-acid sequence, 408 residues long: S-adenosylmethionine:tRNA ribosyltransferase-isomerase (408 aa).

It belongs to the QueA family. As to quaternary structure, monomer.

It is found in the cytoplasm. It carries out the reaction 7-aminomethyl-7-carbaguanosine(34) in tRNA + S-adenosyl-L-methionine = epoxyqueuosine(34) in tRNA + adenine + L-methionine + 2 H(+). It participates in tRNA modification; tRNA-queuosine biosynthesis. Functionally, transfers and isomerizes the ribose moiety from AdoMet to the 7-aminomethyl group of 7-deazaguanine (preQ1-tRNA) to give epoxyqueuosine (oQ-tRNA). The sequence is that of S-adenosylmethionine:tRNA ribosyltransferase-isomerase from Trichormus variabilis (strain ATCC 29413 / PCC 7937) (Anabaena variabilis).